Consider the following 89-residue polypeptide: Elongation factor 1-beta (89 aa).

The protein belongs to the EF-1-beta/EF-1-delta family.

Functionally, promotes the exchange of GDP for GTP in EF-1-alpha/GDP, thus allowing the regeneration of EF-1-alpha/GTP that could then be used to form the ternary complex EF-1-alpha/GTP/AAtRNA. This is Elongation factor 1-beta from Methanosarcina mazei (strain ATCC BAA-159 / DSM 3647 / Goe1 / Go1 / JCM 11833 / OCM 88) (Methanosarcina frisia).